The chain runs to 228 residues: Sodium channel regulatory subunit beta-4 (228 aa).

A signal peptide spans methionine 1–serine 30. The Ig-like C2-type domain maps to leucine 31–phenylalanine 148. Residues leucine 31–valine 162 lie on the Extracellular side of the membrane. Asparagine 45, asparagine 71, and asparagine 113 each carry an N-linked (GlcNAc...) asparagine glycan. A disulfide bond links cysteine 53 and cysteine 131. Residues threonine 163–valine 183 traverse the membrane as a helical segment. The Cytoplasmic segment spans residues lysine 184–valine 228. The interval lysine 198–valine 228 is disordered. Residues valine 203–asparagine 213 show a composition bias toward polar residues. The span at lysine 219 to valine 228 shows a compositional bias: basic and acidic residues.

It belongs to the sodium channel auxiliary subunit SCN4B (TC 8.A.17) family. In terms of assembly, a voltage-gated sodium (Nav) channel consists of an ion-conducting pore-forming alpha subunit functional on its own that is regulated by one or more beta subunits. The beta subunit SCN4B is disulfide-linked to the pore-forming alpha subunit. Interacts with SCN1A; regulatory subunit of SCN1A/Nav1.1. Interacts with SCN2A; regulatory subunit of SCN2A/Nav1.2. In terms of processing, contains an interchain disulfide bond with SCN2A.

It localises to the cell membrane. Its function is as follows. Regulatory subunit of multiple voltage-gated sodium (Nav) channels directly mediating the depolarization of excitable membranes. Navs, also called VGSCs (voltage-gated sodium channels) or VDSCs (voltage-dependent sodium channels), operate by switching between closed and open conformations depending on the voltage difference across the membrane. In the open conformation they allow Na(+) ions to selectively pass through the pore, along their electrochemical gradient. The influx of Na+ ions provokes membrane depolarization, initiating the propagation of electrical signals throughout cells and tissues. The accessory beta subunits participate in localization and functional modulation of the Nav channels. Modulates the activity of SCN1A/Nav1.1. Modulates the activity of SCN2A/Nav1.2. The chain is Sodium channel regulatory subunit beta-4 from Bos taurus (Bovine).